A 372-amino-acid chain; its full sequence is Cyclin-dependent kinase 9 (372 aa).

Residues 19–315 (YEKLAKIGQG…SDDALNHDFF (297 aa)) form the Protein kinase domain. ATP is bound by residues 25–33 (IGQGTFGEV) and lysine 48. The Proton acceptor role is filled by aspartate 149. The tract at residues 341-372 (PPRRRGGHMPQQPANQGRNPAATNQTEFDRVF) is disordered. The segment covering 352–366 (QPANQGRNPAATNQT) has biased composition (polar residues).

Belongs to the protein kinase superfamily. CMGC Ser/Thr protein kinase family. CDC2/CDKX subfamily. Associates with cyclin-T to form P-TEFb. Also associates with cyclin-K.

It localises to the nucleus. The catalysed reaction is L-seryl-[protein] + ATP = O-phospho-L-seryl-[protein] + ADP + H(+). It carries out the reaction L-threonyl-[protein] + ATP = O-phospho-L-threonyl-[protein] + ADP + H(+). It catalyses the reaction [DNA-directed RNA polymerase] + ATP = phospho-[DNA-directed RNA polymerase] + ADP + H(+). Member of the cyclin-dependent kinase pair (CDK9/cyclin-T) complex, also called positive transcription elongation factor b (P-TEFb), which facilitates the transition from abortive to production elongation by phosphorylating the CTD (C-terminal domain) of the large subunit of RNA polymerase II (RNAP II), SUPT5H and RDBP. The CDK9/cyclin-K complex also has a kinase activity toward CTD of RNAP II and can substitute for P-TEFb in vitro. This Gallus gallus (Chicken) protein is Cyclin-dependent kinase 9 (CDK9).